Reading from the N-terminus, the 82-residue chain is Small ribosomal subunit protein bS18 (82 aa).

The disordered stretch occupies residues 1-20; that stretch reads MVDINQIPTRRPFHRRRKTC.

It belongs to the bacterial ribosomal protein bS18 family. As to quaternary structure, part of the 30S ribosomal subunit. Forms a tight heterodimer with protein bS6.

In terms of biological role, binds as a heterodimer with protein bS6 to the central domain of the 16S rRNA, where it helps stabilize the platform of the 30S subunit. This chain is Small ribosomal subunit protein bS18, found in Brucella anthropi (strain ATCC 49188 / DSM 6882 / CCUG 24695 / JCM 21032 / LMG 3331 / NBRC 15819 / NCTC 12168 / Alc 37) (Ochrobactrum anthropi).